A 544-amino-acid polypeptide reads, in one-letter code: CTP synthase (544 aa).

The segment at 1 to 267 (MAKFVFVTGG…CRQVLDVLSL (267 aa)) is amidoligase domain. Ser13 contacts CTP. Ser13 is a binding site for UTP. ATP contacts are provided by residues 14–19 (SIGKGI) and Asp71. Residues Asp71 and Glu141 each coordinate Mg(2+). CTP contacts are provided by residues 148–150 (DIE), 188–193 (KTKPTQ), and Lys224. Residues 188-193 (KTKPTQ) and Lys224 contribute to the UTP site. A Glutamine amidotransferase type-1 domain is found at 292-534 (KVALVGKYVQ…IQAASQRLPQ (243 aa)). Gly354 serves as a coordination point for L-glutamine. Cys381 serves as the catalytic Nucleophile; for glutamine hydrolysis. L-glutamine is bound by residues 382–385 (LGMQ), Glu405, and Arg462. Residues His507 and Glu509 contribute to the active site.

This sequence belongs to the CTP synthase family. As to quaternary structure, homotetramer.

It carries out the reaction UTP + L-glutamine + ATP + H2O = CTP + L-glutamate + ADP + phosphate + 2 H(+). The catalysed reaction is L-glutamine + H2O = L-glutamate + NH4(+). The enzyme catalyses UTP + NH4(+) + ATP = CTP + ADP + phosphate + 2 H(+). It functions in the pathway pyrimidine metabolism; CTP biosynthesis via de novo pathway; CTP from UDP: step 2/2. Its activity is regulated as follows. Allosterically activated by GTP, when glutamine is the substrate; GTP has no effect on the reaction when ammonia is the substrate. The allosteric effector GTP functions by stabilizing the protein conformation that binds the tetrahedral intermediate(s) formed during glutamine hydrolysis. Inhibited by the product CTP, via allosteric rather than competitive inhibition. Functionally, catalyzes the ATP-dependent amination of UTP to CTP with either L-glutamine or ammonia as the source of nitrogen. Regulates intracellular CTP levels through interactions with the four ribonucleotide triphosphates. This Synechococcus sp. (strain RCC307) protein is CTP synthase.